The following is a 61-amino-acid chain: Conotoxin Bt5.1 (61 aa).

The first 22 residues, 1-22 (MRGLPVFVILLLLIASEPSVDA), serve as a signal peptide directing secretion. A propeptide spanning residues 23–48 (RPKTKADVPLTSLNDNAKRTLQILRN) is cleaved from the precursor.

This sequence belongs to the conotoxin T superfamily. Post-translationally, contains 2 disulfide bonds that can be either 'C1-C3, C2-C4' or 'C1-C4, C2-C3', since these disulfide connectivities have been observed for conotoxins with cysteine framework V (for examples, see AC P0DQQ7 and AC P81755). As to expression, expressed by the venom duct.

It is found in the secreted. The sequence is that of Conotoxin Bt5.1 from Conus betulinus (Beech cone).